Consider the following 260-residue polypeptide: Putative sgc region transcriptional regulator (260 aa).

Residues 5–61 (RPDRIKQMLHYLWQHRHLSTQQAMELFGYAEATVRRDFQYIVNQYPGMIRGHGCLDF) enclose the HTH deoR-type domain. The H-T-H motif DNA-binding region spans 22–41 (LSTQQAMELFGYAEATVRRD).

Functionally, putative transcriptional regulator for the sgcREAQCX region. This Escherichia coli (strain K12) protein is Putative sgc region transcriptional regulator (sgcR).